We begin with the raw amino-acid sequence, 106 residues long: uncharacterized protein (106 aa).

Residues 1–46 (MPQGGTPCRRARRAVRPERPTSPEGVFCVGGGAPGGPPDTTNTVSA) form a disordered region.

This is an uncharacterized protein from Gracula (BFDV).